Reading from the N-terminus, the 435-residue chain is Eukaryotic translation initiation factor 3 subunit E (435 aa).

The region spanning Thr241 to Gln409 is the PCI domain.

The protein belongs to the eIF-3 subunit E family. In terms of assembly, component of the eukaryotic translation initiation factor 3 (eIF-3) complex.

The protein localises to the cytoplasm. In terms of biological role, component of the eukaryotic translation initiation factor 3 (eIF-3) complex, which is involved in protein synthesis of a specialized repertoire of mRNAs and, together with other initiation factors, stimulates binding of mRNA and methionyl-tRNAi to the 40S ribosome. The eIF-3 complex specifically targets and initiates translation of a subset of mRNAs involved in cell proliferation. This Phaeosphaeria nodorum (strain SN15 / ATCC MYA-4574 / FGSC 10173) (Glume blotch fungus) protein is Eukaryotic translation initiation factor 3 subunit E.